We begin with the raw amino-acid sequence, 851 residues long: Putative mediator of RNA polymerase II transcription subunit 15 (851 aa).

2 disordered regions span residues 79-212 (AQAG…NTVY) and 299-368 (QQQQ…NNTH). Low complexity predominate over residues 98-141 (ITPLIQQPITPVQQQVPPQKQPQPVYNQQQNQQQNQNQYTTTYP). Residues 145 to 154 (TPQQSNTPPI) are compositionally biased toward polar residues. Over residues 155 to 212 (SNNNSNNNSNNNLNNNNNNNINNNNNNNNNNNNNNNNNNNNNNNNNNNNNNNNNNTVY) the composition is skewed to low complexity. The stretch at 231–307 (QLYLQQQQQL…QQQQQQQHQQ (77 aa)) forms a coiled coil. Residues 308 to 319 (PVQMPSGVTTNK) show a composition bias toward polar residues. The segment covering 320-358 (QSPQPQNTPLTPQQQQQLLAAQQSHAQAQANQNQQLQNP) has biased composition (low complexity). Residues 359 to 368 (KRISSTNNTH) show a composition bias toward polar residues. Residues 790-827 (LKDLESKMNKEFENSNDLNQLNNNINNNNNNNNSFSDN) are a coiled coil.

It belongs to the Mediator complex subunit 15 family. As to quaternary structure, component of the Mediator complex.

The protein resides in the cytoplasm. Its subcellular location is the nucleus. Its function is as follows. Component of the Mediator complex, a coactivator involved in the regulated transcription of nearly all RNA polymerase II-dependent genes. Mediator functions as a bridge to convey information from gene-specific regulatory proteins to the basal RNA polymerase II transcription machinery. Mediator is recruited to promoters by direct interactions with regulatory proteins and serves as a scaffold for the assembly of a functional preinitiation complex with RNA polymerase II and the general transcription factors. The protein is Putative mediator of RNA polymerase II transcription subunit 15 (med15) of Dictyostelium discoideum (Social amoeba).